The following is a 576-amino-acid chain: Lysine--tRNA ligase (576 aa).

Positions 413 and 420 each coordinate Mg(2+).

This sequence belongs to the class-II aminoacyl-tRNA synthetase family. In terms of assembly, homodimer. Mg(2+) is required as a cofactor.

Its subcellular location is the cytoplasm. It carries out the reaction tRNA(Lys) + L-lysine + ATP = L-lysyl-tRNA(Lys) + AMP + diphosphate. In Bacteroides thetaiotaomicron (strain ATCC 29148 / DSM 2079 / JCM 5827 / CCUG 10774 / NCTC 10582 / VPI-5482 / E50), this protein is Lysine--tRNA ligase.